We begin with the raw amino-acid sequence, 138 residues long: Single-stranded DNA-binding protein 3 (138 aa).

An SSB domain is found at 1–104 (MINNIVLVGR…VVAENFQLLE (104 aa)). Over residues 105–121 (SRNSQQQTNQSGNSSNS) the composition is skewed to low complexity. The tract at residues 105–138 (SRNSQQQTNQSGNSSNSYFGNANKMDISDDDLPF) is disordered. Positions 133 to 138 (DDDLPF) match the Important for interaction with partner proteins motif.

As to quaternary structure, homotetramer.

In terms of biological role, plays an important role in DNA replication, recombination and repair. Binds to ssDNA and to an array of partner proteins to recruit them to their sites of action during DNA metabolism. The polypeptide is Single-stranded DNA-binding protein 3 (ssb3) (Streptococcus agalactiae serotype V (strain ATCC BAA-611 / 2603 V/R)).